The primary structure comprises 72 residues: Large ribosomal subunit protein bL32 (72 aa).

It belongs to the bacterial ribosomal protein bL32 family.

The protein is Large ribosomal subunit protein bL32 of Dehalococcoides mccartyi (strain ATCC BAA-2266 / KCTC 15142 / 195) (Dehalococcoides ethenogenes (strain 195)).